The chain runs to 555 residues: DNA ligase (555 aa).

Glu-247 contacts ATP. The N6-AMP-lysine intermediate role is filled by Lys-249. ATP-binding residues include Arg-254, Arg-269, Glu-298, Phe-337, Arg-411, and Lys-417.

This sequence belongs to the ATP-dependent DNA ligase family. Mg(2+) is required as a cofactor.

It catalyses the reaction ATP + (deoxyribonucleotide)n-3'-hydroxyl + 5'-phospho-(deoxyribonucleotide)m = (deoxyribonucleotide)n+m + AMP + diphosphate.. Its function is as follows. DNA ligase that seals nicks in double-stranded DNA during DNA replication, DNA recombination and DNA repair. This chain is DNA ligase, found in Archaeoglobus fulgidus (strain ATCC 49558 / DSM 4304 / JCM 9628 / NBRC 100126 / VC-16).